Consider the following 565-residue polypeptide: MIPREVIEEIKEKVDIVEVISEYVNLTRVGSSYRALCPFHSETNPSFYVHPGLKIYHCFGCGASGDVIKFLQEMEGISFQEALERLAKRAGIDLSLYRTEGTSEYGKYIRLYEETWKRYVKELEKSKEAKDYLKSRGFSEEDIAKFGFGYVPKRSSISIEVAEGMNITLEELVRYGIALKKGDRFVDRFEGRIVVPIKNDSGHIVAFGGRALGNEEPKYLNSPETRYFSKKKTLFLFDEAKKVAKEVGFFVITEGYFDALAFRKDGIPTAVAVLGASLSREAILKLSAYSKNVILCFDNDKAGFRATLKSLEDLLDYEFNVLVATPSPYKDPDELFQKEGEGSLKKMLKNSRSFEYFLVTAGEVFFDRNSPAGVRSYLSFLKGWVQKMRRKGYLKHIENLVNEVSSSLQIPENQILNFFESDRSNTMPVHETKSSKVYDEGRGLAYLFLNYEDLREKILELDLEVLEDKNAREFFKRVSLGEDLNKVIENFPKELKDWIFETIESIPPPKDPEKFLGDLSEKLKIRRIERRIAEIDDMIKKASNDEERRLLLSMKVDLLRKIKRR.

The segment at Cys37–Cys61 adopts a CHC2-type zinc-finger fold. Residues Gly248–Tyr329 form the Toprim domain. Mg(2+) contacts are provided by Glu254, Asp298, and Asp300.

Belongs to the DnaG primase family. In terms of assembly, monomer. Interacts with DnaB. The cofactor is Zn(2+). It depends on Mg(2+) as a cofactor.

The enzyme catalyses ssDNA + n NTP = ssDNA/pppN(pN)n-1 hybrid + (n-1) diphosphate.. Functionally, RNA polymerase that catalyzes the synthesis of short RNA molecules used as primers for DNA polymerase during DNA replication. The sequence is that of DNA primase from Thermotoga maritima (strain ATCC 43589 / DSM 3109 / JCM 10099 / NBRC 100826 / MSB8).